We begin with the raw amino-acid sequence, 55 residues long: Large ribosomal subunit protein bL33 (55 aa).

The protein belongs to the bacterial ribosomal protein bL33 family.

This is Large ribosomal subunit protein bL33 from Bifidobacterium longum (strain DJO10A).